The following is an 868-amino-acid chain: mRNA-capping enzyme (868 aa).

K282 acts as the N6-GMP-lysine intermediate in catalysis. Residues 594 to 868 (GIYRAQTALI…LFGFICLRKN (275 aa)) form the mRNA cap 0 methyltransferase domain. Residues K607, G624, D646, and 710-712 (LFI) each bind S-adenosyl-L-methionine.

This sequence in the N-terminal section; belongs to the dsDNA virus mRNA guanylyltransferase family. In the C-terminal section; belongs to the class I-like SAM-binding methyltransferase superfamily. mRNA cap 0 methyltransferase family. Part of the viral DNA-directed RNA polymerase that consists of 8 polII-like subunits (RPB1, RPB2, RPB3, RPB5, RPB6, RPB7, RPB9, RPB10), a capping enzyme and a termination factor.

Its subcellular location is the virion. It catalyses the reaction a 5'-end triphospho-ribonucleoside in mRNA + H2O = a 5'-end diphospho-ribonucleoside in mRNA + phosphate + H(+). The catalysed reaction is a 5'-end diphospho-ribonucleoside in mRNA + GTP + H(+) = a 5'-end (5'-triphosphoguanosine)-ribonucleoside in mRNA + diphosphate. It carries out the reaction a 5'-end (5'-triphosphoguanosine)-ribonucleoside in mRNA + S-adenosyl-L-methionine = a 5'-end (N(7)-methyl 5'-triphosphoguanosine)-ribonucleoside in mRNA + S-adenosyl-L-homocysteine. It participates in mRNA processing; mRNA capping. In terms of biological role, probably catalyzes the second reaction in the mRNA cap formation pathway. Forms a covalent complex with GTP. The chain is mRNA-capping enzyme from Ornithodoros (relapsing fever ticks).